Consider the following 415-residue polypeptide: Corticotropin-releasing factor receptor 1 (415 aa).

The signal sequence occupies residues 1-23 (MARHPQLRLVKALLLLGLNPVSA). The Extracellular portion of the chain corresponds to 24–111 (SLQDQHCESL…CQEILNEEKK (88 aa)). 3 disulfide bridges follow: C30–C54, C44–C87, and C68–C102. N38, N78, and N98 each carry an N-linked (GlcNAc...) asparagine glycan. Residues 99–108 (YSECQEILNE) are important for peptide agonist binding. The chain crosses the membrane as a helical span at residues 112–142 (SKVHYHVAVIINYLGHCISLVALLVAFVLFL). The Cytoplasmic segment spans residues 143-149 (RLRSIRC). A helical membrane pass occupies residues 150-174 (LRNIIHWNLISAFILRNATWFVVQL). The Extracellular portion of the chain corresponds to 175–189 (TMSPEVHQSNVGWCR). C188 and C258 are joined by a disulfide. A helical membrane pass occupies residues 190–218 (LVTAAYNYFHVTNFFWMFGEGCYLHTAIV). The Cytoplasmic portion of the chain corresponds to 219–225 (LTYSTDR). A helical transmembrane segment spans residues 226-253 (LRKWMFICIGWGVPFPIIVAWAIGKLYY). The Extracellular portion of the chain corresponds to 254–269 (DNEKCWFGKRPGVYTD). A helical transmembrane segment spans residues 270–295 (YIYQGPMILVLLINFIFLFNIVRILM). Residues 280–290 (LLINFIFLFNI) form an important for antagonist binding region. The Cytoplasmic portion of the chain corresponds to 296–306 (TKLRASTTSET). The residue at position 301 (S301) is a Phosphoserine; by PKA. Residues 307–331 (IQYRKAVKATLVLLPLLGITYMLFF) form a helical membrane-spanning segment. Over 332-338 (VNPGEDE) the chain is Extracellular. The chain crosses the membrane as a helical span at residues 339–368 (VSRVVFIYFNSFLESFQGFFVSVFYCFLNS). Topologically, residues 369-415 (EVRSAIRKRWHRWQDKHSIRARVARAMSIPTSPTRVSFHSIKQSTAV) are cytoplasmic.

It belongs to the G-protein coupled receptor 2 family. In terms of assembly, heterodimer; heterodimerizes with GPER1. Interacts (via N-terminal extracellular domain) with CRH and UCN. Interacts with DLG1; this inhibits endocytosis of CRHR1 after agonist binding. In terms of processing, C-terminal Ser or Thr residues may be phosphorylated. Phosphorylation at Ser-301 by PKA prevents maximal coupling to Gq-protein, and thereby negatively regulates downstream signaling. Expressed abundantly in the pituitary, cerebral cortex, hippocampus, amygdala and cerebellum.

The protein resides in the cell membrane. Its subcellular location is the endosome. Its function is as follows. G-protein coupled receptor for CRH (corticotropin-releasing factor) and UCN (urocortin). Has high affinity for CRH and UCN. Ligand binding causes a conformation change that triggers signaling via guanine nucleotide-binding proteins (G proteins) and down-stream effectors, such as adenylate cyclase. Promotes the activation of adenylate cyclase, leading to increased intracellular cAMP levels. Inhibits the activity of the calcium channel CACNA1H. Required for normal embryonic development of the adrenal gland and for normal hormonal responses to stress. Plays a role in the response to anxiogenic stimuli. In Macaca mulatta (Rhesus macaque), this protein is Corticotropin-releasing factor receptor 1 (CRHR1).